A 604-amino-acid chain; its full sequence is Afamin (604 aa).

Residues 1–21 form the signal peptide; it reads MKQLKLTGFVIFFFFLTESLT. 3 Albumin domains span residues 22-210, 211-403, and 404-598; these read LPTQ…EPFI, YYLK…RFNE, and TTEK…PKLA. Cystine bridges form between cysteine 77–cysteine 86, cysteine 99–cysteine 114, cysteine 113–cysteine 124, cysteine 148–cysteine 193, cysteine 192–cysteine 201, cysteine 224–cysteine 270, cysteine 269–cysteine 277, cysteine 289–cysteine 303, cysteine 302–cysteine 313, cysteine 340–cysteine 385, cysteine 384–cysteine 393, cysteine 416–cysteine 462, cysteine 461–cysteine 470, cysteine 483–cysteine 499, cysteine 498–cysteine 509, cysteine 536–cysteine 581, and cysteine 580–cysteine 589. Residue asparagine 109 is glycosylated (N-linked (GlcNAc...) asparagine). The interval 215–319 is binding pocket for hydrophobic ligands; that stretch reads ALSSYQKNAC…RGECIIYSNK (105 aa). N-linked (GlcNAc...) asparagine glycosylation is present at asparagine 434.

The protein belongs to the ALB/AFP/VDB family. In terms of assembly, forms a 1:1 complex with Wnt family members; interacts with WNT3A and WNT5A. Interacts with WNT1, WNT2B, WNT3, WNT7A, WNT7B, WNT8, WNT9A, WNT9B, WNT10A and WNT10B. N-glycosylated; more than 90% of the glycans are sialylated.

It is found in the secreted. Functions as a carrier for hydrophobic molecules in body fluids. Essential for the solubility and activity of lipidated Wnt family members, including WNT1, WNT2B, WNT3, WNT3A, WNT5A, WNT7A, WNT7B, WNT8, WNT9A, WNT9B, WNT10A and WNT10B. Binds vitamin E. May transport vitamin E in body fluids under conditions where the lipoprotein system is not sufficient. May be involved in the transport of vitamin E across the blood-brain barrier. The chain is Afamin (AFM) from Bos taurus (Bovine).